The primary structure comprises 517 residues: N-acetylglucosamine-1-phosphodiester alpha-N-acetylglucosaminidase (517 aa).

Residues 1 to 25 form the signal peptide; it reads MAAPRGPGLFLIPALLGLLGVAWCS. Residues 26–49 constitute a propeptide, removed in mature form; the sequence is LSFGVSRDDDLLLPYPLARRRPSR. The disordered stretch occupies residues 49–75; it reads RDCARVRSGSPEQESWPPPPTNPGASH. Residues 50 to 453 are Lumenal-facing; it reads DCARVRSGSP…ASFTRTTWLA (404 aa). 5 disulfide bridges follow: cysteine 116–cysteine 149, cysteine 133–cysteine 324, cysteine 308–cysteine 315, cysteine 363–cysteine 374, and cysteine 381–cysteine 390. N-linked (GlcNAc...) asparagine glycans are attached at residues asparagine 215 and asparagine 297. The region spanning 359–391 is the EGF-like domain; it reads SELDCGPSNCSQHGLCTETGCHCDAGWTGSNCS. N-linked (GlcNAc...) asparagine glycosylation is found at asparagine 367, asparagine 389, and asparagine 421. A helical transmembrane segment spans residues 454-474; it reads LTLTLIFLLLISTGVNVSLFL. Residues 475 to 517 lie on the Cytoplasmic side of the membrane; that stretch reads GSRAERNRHLDGDYVYHPLQEVNGEALTAEKEHMEETSNPFKD. The Tyrosine-based internalization motif signature appears at 488–491; sequence YVYH. The mediates the interaction with AP4M1 stretch occupies residues 488–495; the sequence is YVYHPLQE. An NPF internalization motif motif is present at residues 511-515; it reads TSNPF.

As to quaternary structure, homotetramer arranged as two disulfide-linked homodimers. Interacts with AP4M1. The precursor is cleaved and activated in the trans-Golgi network by a furin endopeptidase.

It is found in the golgi apparatus. The protein resides in the golgi stack membrane. Its subcellular location is the trans-Golgi network. The catalysed reaction is N(4)-[6-(N-acetyl-alpha-D-glucosaminyl-1-phospho)-alpha-D-mannosyl-(1-&gt;2)-alpha-D-mannosyl-(glycan)]-L-asparaginyl-[protein] + H2O = N(4)-[6-phospho-alpha-D-mannosyl-(1-&gt;2)-alpha-D-mannosyl-(glycan)]-L-asparaginyl-[protein] + N-acetyl-D-glucosamine + H(+). It participates in protein modification; protein glycosylation. Catalyzes the second step in the formation of the mannose 6-phosphate targeting signal on lysosomal enzyme oligosaccharides by removing GlcNAc residues from GlcNAc-alpha-P-mannose moieties, which are formed in the first step. Also hydrolyzes UDP-GlcNAc, a sugar donor for Golgi N-acetylglucosaminyltransferases. This chain is N-acetylglucosamine-1-phosphodiester alpha-N-acetylglucosaminidase (Nagpa), found in Mus musculus (Mouse).